The sequence spans 31 residues: MERSTRELCLNFTVVLITVILIWLLVRSYQY.

The Cytoplasmic segment spans residues 1–7; sequence MERSTRE. Residues 8–26 traverse the membrane as a helical segment; sequence LCLNFTVVLITVILIWLLV. At 27 to 31 the chain is on the lumenal side; it reads RSYQY.

Belongs to the sarcolipin family. Homooligomer. Can also form heterooligomers with other sarcoplasmic/endoplasmic reticulum calcium ATPase (SERCA) regulators ARLN, ERLN, PLN and STRIT1/DWORF. Monomer. Interacts with calcium ATPase ATP2A1/SERCA1. Interacts as a monomer with ATP2A2/SERCA2; the interaction decreases ATP2A2 Ca(2+) affinity. Interacts with VMP1; VMP1 competes with PLN and SLN to prevent them from forming an inhibitory complex with ATP2A2. In terms of tissue distribution, skeletal muscle (at protein level).

It localises to the sarcoplasmic reticulum membrane. The protein localises to the endoplasmic reticulum membrane. In terms of biological role, reversibly inhibits the activity of ATP2A1/SERCA1 and ATP2A2/SERCA2 in sarcoplasmic reticulum by decreasing the apparent affinity of the ATPase for Ca(2+). Also inhibits the activity of ATP2A3/SERCA3. Modulates calcium re-uptake during muscle relaxation and plays an important role in calcium homeostasis in muscle. Required for muscle-based, non-shivering thermogenesis. The chain is Sarcolipin (SLN) from Oryctolagus cuniculus (Rabbit).